The following is a 709-amino-acid chain: Golgin-84 (709 aa).

The Cytoplasmic segment spans residues 1–664 (MASWLKVAED…RATRFLWRHP (664 aa)). Disordered regions lie at residues 24-132 (TELS…VVDR), 144-195 (EVEV…NQDA), and 211-265 (EVIH…DQLE). Low complexity predominate over residues 29–43 (EQSSPQPSGSSSQEG). Positions 78-89 (PPRERIKIEKIR) are enriched in basic and acidic residues. Residues 94–113 (VDSSSVDASASKPDVSSSDV) are compositionally biased toward low complexity. The segment covering 114–132 (KGLDDDGGAEKEEKVVVDR) has biased composition (basic and acidic residues). Residues 162–180 (DGAADSGNSEGAAESSAPS) are compositionally biased toward low complexity. Basic and acidic residues-rich tracts occupy residues 211–222 (EVIHEKNIKEVP) and 248–265 (QQEH…DQLE). Residues 287 to 592 (RVCAGLSSRL…AALEFQLEKS (306 aa)) are a coiled coil. Residues 665–684 (VARVSLLFYLVFVHLFLMYL) traverse the membrane as a helical; Signal-anchor for type II membrane protein segment. Residues 685 to 707 (MHRLQDFASREGPTAMGGLANSD) lie on the Lumenal side of the membrane.

The protein localises to the golgi apparatus membrane. Its function is as follows. May be involved in maintaining Golgi structure and in intra-Golgi transport. The chain is Golgin-84 from Oryza sativa subsp. japonica (Rice).